The sequence spans 1615 residues: MATLPRAAAAAAPSPAAALLPLPRAAPLLAGRAAARSAARRLRARGTRAPPLAAARRGWGGVSPRAVLDLPRRREAAEKPAQKAADLNEILSERGACGVGFVANLKNEPSFNIVRDALVALGCMEHRGGCGADNDSGDGSGLMSGIPWDLFNDWANKQGLAPLDRTNTGVGMVFLPQDENSMEEAKAVVAKVFTDEGLEVLGWRTVPFNVSVVGRYAKETMPNIQQIFVKVAKEDNADDIERELYICRKLIERATKSASWADELYFCSLSSRTIVYKGMLRSEILGQFYLDLQNELYKSPFAIYHRRYSTNTSPRWPLAQPMRLLGHNGEINTIQGNLNWMRSREATLQSPVWRGREHEIRPFGDPKASDSANLDSTAELLLRSGRSPAEAMMILVPEAYKNHPTLSIKYPEVIDFYDYYKGQMEAWDGPALLLFSDGRTVGACLDRNGLRPARYWRTSDDFVYVASEVGVIPMDESKVVMKGRLGPGMMITVDLQTGQVLENTEVKKSVASANPYGSWLQQSTRSIKPVNFQSSVAMDNETVLRHQQAFGYSSEDVQMVIETMASQGKEPTFCMGDDIPLAVLSQKPHMLFDYFKQRFAQVTNPAIDPLREGLVMSLEVNIGKRRNILEVGPENADQVTLSSPVLNEGELESLLNDSKLKPKVLSTYFDIRKGLDGSLDKAIKVLCDEADAAVRNGSQLLVLSDRSEALEPTRPAIPILLAVGAIHQHLIQNGLRMSASIVADTAQCFSTHQFACLIGYGASAICPYLALETCRQWRLSNKTVNLMRNGKMPTVTIEQAQRNFIKAVKSGLLKILSKMGISLLSSYCGAQIFEIYGLGQEVVDLAFCGSVSKIGGLTLDELGRETLSFWVKAFSEDTAKRLENFGFIQSRPGGEYHANNPEMSKLLHKAVREKSDNAYTVYQQHLASRPVNVLRDLLELKSDRAPIPIGKVEPATSIVERFCTGGMSLGAISRETHEAIAIAMNRIGGKSNSGEGGEDPIRWSPLADVEDGYSPTLPHLKGLQNGDTATSAIKQVASGRFGVTPTFLVNAEQIEIKIAQGAKPGEGGQLPGKKVSAYIARLRNSKPGVPLISPPPHHDIYSIEDLAQLIYDLHQINPKAKVSVKLVAEAGIGTVASGVSKGNADIIQISGHDGGTGASPISSIKHAGGPWELGLSETHQTLIQNGLRERVVLRVDGGFRSGLDVLMAAAMGADEYGFGSVAMIATGCVMARICHTNNCPVGVASQREELRARFPGVPGDLVNYFLFVAEEVRATLAQLGFEKLDDIIGRTDILKAKHVSLAKTQHIDLKYLLSSAGLPKWSSSQIRSQDVHSNGPVLDETILADPDISDAIENEKEVSKTFQIYNVDRAVCGRVAGVIAKKYGDTGFAGQLNITFTGSAGQSFGCFLTPGMNIRLVGEANDYVGKGMAGGELVVVPVEKTGFVPEDAAIVGNTCLYGATGGQVFVRGKTGERFAVRNSLGQAVVEGTGDHCCEYMTGGCVVVLGKVGRNVAAGMTGGLAYILDEDDTLVPKVNKEIVKMQRVNAPAGQMQLKGLIEAYVEKTGSEKGATILREWEAYLPLFWQLVPPSEEDSPEACAEFERVLAKQATTVQSAK.

Residues 1-52 (MATLPRAAAAAAPSPAAALLPLPRAAPLLAGRAAARSAARRLRARGTRAPPL) constitute a chloroplast transit peptide. Cysteine 97 functions as the Nucleophile in the catalytic mechanism. Residues 97-496 (CGVGFVANLK…PGMMITVDLQ (400 aa)) form the Glutamine amidotransferase type-2 domain. 1175 to 1232 (LSETHQTLIQNGLRERVVLRVDGGFRSGLDVLMAAAMGADEYGFGSVAMIATGCVMAR) contributes to the FMN binding site. Positions 1228, 1234, and 1239 each coordinate [3Fe-4S] cluster.

Belongs to the glutamate synthase family. [3Fe-4S] cluster is required as a cofactor. FAD serves as cofactor. The cofactor is FMN. In terms of tissue distribution, expressed in leaf blades and at lower levels in roots.

The protein localises to the plastid. Its subcellular location is the chloroplast. It carries out the reaction 2 oxidized [2Fe-2S]-[ferredoxin] + 2 L-glutamate = L-glutamine + 2 reduced [2Fe-2S]-[ferredoxin] + 2-oxoglutarate + 2 H(+). Its pathway is amino-acid biosynthesis; L-glutamate biosynthesis via GLT pathway; L-glutamate from 2-oxoglutarate and L-glutamine (ferredoxin route): step 1/1. It participates in energy metabolism; nitrogen metabolism. In terms of biological role, involved in glutamate biosynthesis in leaf. Required for the reassimilation of ammonium ions generated during photorespiration. This is Ferredoxin-dependent glutamate synthase, chloroplastic (GLU) from Oryza sativa subsp. japonica (Rice).